The primary structure comprises 390 residues: Chorismate synthase (390 aa).

Arg40 and Arg46 together coordinate NADP(+). FMN contacts are provided by residues 129-131 (RAS), 249-250 (QA), Gly294, 309-313 (KPIPT), and Arg335.

This sequence belongs to the chorismate synthase family. In terms of assembly, homotetramer. FMNH2 serves as cofactor.

The catalysed reaction is 5-O-(1-carboxyvinyl)-3-phosphoshikimate = chorismate + phosphate. It participates in metabolic intermediate biosynthesis; chorismate biosynthesis; chorismate from D-erythrose 4-phosphate and phosphoenolpyruvate: step 7/7. Functionally, catalyzes the anti-1,4-elimination of the C-3 phosphate and the C-6 proR hydrogen from 5-enolpyruvylshikimate-3-phosphate (EPSP) to yield chorismate, which is the branch point compound that serves as the starting substrate for the three terminal pathways of aromatic amino acid biosynthesis. This reaction introduces a second double bond into the aromatic ring system. This is Chorismate synthase from Desulforudis audaxviator (strain MP104C).